The chain runs to 355 residues: Hydroxylysine kinase (355 aa).

Asp-215 functions as the Proton acceptor in the catalytic mechanism.

It belongs to the aminoglycoside phosphotransferase family.

It localises to the cytoplasm. The catalysed reaction is (5R)-5-hydroxy-L-lysine + GTP = (5R)-5-phosphooxy-L-lysine + GDP + H(+). Its function is as follows. Catalyzes the GTP-dependent phosphorylation of 5-hydroxy-L-lysine. This is Hydroxylysine kinase (hykk) from Danio rerio (Zebrafish).